Here is a 426-residue protein sequence, read N- to C-terminus: Serine hydroxymethyltransferase (426 aa).

(6S)-5,6,7,8-tetrahydrofolate contacts are provided by residues Leu-118 and 122–124; that span reads GHL. Lys-227 carries the N6-(pyridoxal phosphate)lysine modification. A disordered region spans residues 342 to 368; the sequence is NTIPNDPKPPTQASGIRLGTPAMTTRG.

This sequence belongs to the SHMT family. In terms of assembly, homodimer. Pyridoxal 5'-phosphate is required as a cofactor.

It localises to the cytoplasm. The catalysed reaction is (6R)-5,10-methylene-5,6,7,8-tetrahydrofolate + glycine + H2O = (6S)-5,6,7,8-tetrahydrofolate + L-serine. It participates in one-carbon metabolism; tetrahydrofolate interconversion. It functions in the pathway amino-acid biosynthesis; glycine biosynthesis; glycine from L-serine: step 1/1. Functionally, catalyzes the reversible interconversion of serine and glycine with tetrahydrofolate (THF) serving as the one-carbon carrier. This reaction serves as the major source of one-carbon groups required for the biosynthesis of purines, thymidylate, methionine, and other important biomolecules. Also exhibits THF-independent aldolase activity toward beta-hydroxyamino acids, producing glycine and aldehydes, via a retro-aldol mechanism. This chain is Serine hydroxymethyltransferase, found in Thermomicrobium roseum (strain ATCC 27502 / DSM 5159 / P-2).